Consider the following 394-residue polypeptide: 8-amino-7-oxononanoate synthase (394 aa).

Arginine 21 is a binding site for substrate. A pyridoxal 5'-phosphate-binding site is contributed by 112-113; the sequence is GY. Histidine 137 lines the substrate pocket. 3 residues coordinate pyridoxal 5'-phosphate: serine 183, histidine 211, and threonine 239. The residue at position 242 (lysine 242) is an N6-(pyridoxal phosphate)lysine. Threonine 358 is a substrate binding site.

This sequence belongs to the class-II pyridoxal-phosphate-dependent aminotransferase family. BioF subfamily. Homodimer. Requires pyridoxal 5'-phosphate as cofactor.

It catalyses the reaction 6-carboxyhexanoyl-[ACP] + L-alanine + H(+) = (8S)-8-amino-7-oxononanoate + holo-[ACP] + CO2. It functions in the pathway cofactor biosynthesis; biotin biosynthesis. In terms of biological role, catalyzes the decarboxylative condensation of pimeloyl-[acyl-carrier protein] and L-alanine to produce 8-amino-7-oxononanoate (AON), [acyl-carrier protein], and carbon dioxide. This Burkholderia cenocepacia (strain ATCC BAA-245 / DSM 16553 / LMG 16656 / NCTC 13227 / J2315 / CF5610) (Burkholderia cepacia (strain J2315)) protein is 8-amino-7-oxononanoate synthase.